Consider the following 944-residue polypeptide: Translation initiation factor IF-2 (944 aa).

Positions L55–P81 are enriched in low complexity. The interval L55–R329 is disordered. Over residues G82–T92 the composition is skewed to pro residues. Over residues A93–V107 the composition is skewed to low complexity. Basic and acidic residues predominate over residues A123–A135. Low complexity-rich tracts occupy residues E136–S153 and G211–R222. Residues P223–P236 are compositionally biased toward pro residues. Positions G244 to A257 are enriched in low complexity. Gly residues predominate over residues G258 to R269. Residues P270–G283 show a composition bias toward low complexity. Residues G284–G310 show a composition bias toward gly residues. The span at G311 to K322 shows a compositional bias: basic residues. Positions I437–R611 constitute a tr-type G domain. Residues G446 to T453 form a G1 region. G446–T453 contacts GTP. Residues G471–H475 form a G2 region. A G3 region spans residues D496–G499. GTP contacts are provided by residues D496–H500 and N550–D553. The segment at N550–D553 is G4. Residues S586 to L588 form a G5 region.

The protein belongs to the TRAFAC class translation factor GTPase superfamily. Classic translation factor GTPase family. IF-2 subfamily.

It localises to the cytoplasm. Its function is as follows. One of the essential components for the initiation of protein synthesis. Protects formylmethionyl-tRNA from spontaneous hydrolysis and promotes its binding to the 30S ribosomal subunits. Also involved in the hydrolysis of GTP during the formation of the 70S ribosomal complex. The polypeptide is Translation initiation factor IF-2 (Clavibacter michiganensis subsp. michiganensis (strain NCPPB 382)).